The following is a 417-amino-acid chain: MEGNFLNNPWINCCFVTTYAGVVAQYFKKGAEWFNFTTPSIGTFTNEQNEEDSSNYSTSGYDSSAETISANSSPINRSGVRSRISQKQRQRILKEAHFKAQQLNRKMVVQKSCPPDHEIKPVPSKFYQFDAITDFGFGGPVLLVGMQKDVEVMKLETKEKARSGRKKNRKSKYKCNMYKMTKLAQIVAKIPKKKEVIEIDEDGFQKVSSKKAAKLRTLKPADVPTPPTKVVENKEEVIKLEVIEQPEPIVLPVSTPTVTFSRFEEMKRVVKVEKAQESAKTKALKKSKAISISRHVGFLQILEKLEETEEKPQVENEKKVVVKHVQSARKNQKKGRKNRKVEPPKEEFEPYEEDHYNFKRYFLIIGVYVLVFIYVCTNVLTVGVSYEFPYITLANKNVRAINSTLPKSVNESSFLIR.

Disordered stretches follow at residues 44–83 (FTNEQNEEDSSNYSTSGYDSSAETISANSSPINRSGVRSR) and 325–346 (VQSARKNQKKGRKNRKVEPPKE). A compositionally biased stretch (low complexity) spans 54-64 (SNYSTSGYDSS). Residues 65–76 (AETISANSSPIN) show a composition bias toward polar residues. Residues 326–339 (QSARKNQKKGRKNR) are compositionally biased toward basic residues. A helical membrane pass occupies residues 362 to 382 (FLIIGVYVLVFIYVCTNVLTV).

Its subcellular location is the membrane. This is an uncharacterized protein from Caenorhabditis elegans.